The chain runs to 1141 residues: Eukaryotic translation initiation factor 3 subunit A (1141 aa).

The region spanning 319–501 is the PCI domain; the sequence is LQRMAAHVLL…NSIYFGTDLT (183 aa). Basic and acidic residues-rich tracts occupy residues 588-623 and 829-899; these read QNNA…EERE and AAEE…RGGD. 2 disordered regions span residues 588 to 631 and 829 to 1141; these read QNNA…QNEI and AAEE…VKRR. Ser908 bears the Phosphoserine mark. Basic and acidic residues-rich tracts occupy residues 920-976, 990-1051, 1059-1087, and 1110-1131; these read ERND…EPDT, SRDD…EPQR, DAPR…RGDQ, and TREE…KAGD.

The protein belongs to the eIF-3 subunit A family. Component of the eukaryotic translation initiation factor 3 (eIF-3) complex. The eIF-3 complex interacts with pix.

The protein localises to the cytoplasm. In terms of biological role, RNA-binding component of the eukaryotic translation initiation factor 3 (eIF-3) complex, which is involved in protein synthesis of a specialized repertoire of mRNAs and, together with other initiation factors, stimulates binding of mRNA and methionyl-tRNAi to the 40S ribosome. The eIF-3 complex specifically targets and initiates translation of a subset of mRNAs involved in cell proliferation. This is Eukaryotic translation initiation factor 3 subunit A from Drosophila sechellia (Fruit fly).